A 490-amino-acid polypeptide reads, in one-letter code: ATP synthase subunit beta (490 aa).

175–182 (GGAGVGKT) is an ATP binding site.

It belongs to the ATPase alpha/beta chains family. F-type ATPases have 2 components, CF(1) - the catalytic core - and CF(0) - the membrane proton channel. CF(1) has five subunits: alpha(3), beta(3), gamma(1), delta(1), epsilon(1). CF(0) has three main subunits: a(1), b(2) and c(9-12). The alpha and beta chains form an alternating ring which encloses part of the gamma chain. CF(1) is attached to CF(0) by a central stalk formed by the gamma and epsilon chains, while a peripheral stalk is formed by the delta and b chains.

The protein resides in the cell membrane. It catalyses the reaction ATP + H2O + 4 H(+)(in) = ADP + phosphate + 5 H(+)(out). In terms of biological role, produces ATP from ADP in the presence of a proton gradient across the membrane. The catalytic sites are hosted primarily by the beta subunits. The polypeptide is ATP synthase subunit beta (Acidothermus cellulolyticus (strain ATCC 43068 / DSM 8971 / 11B)).